A 946-amino-acid chain; its full sequence is C-1-tetrahydrofolate synthase, cytoplasmic (946 aa).

The segment at 2–319 (AGQVLDGKAC…PPLPLKLLTP (318 aa)) is methylenetetrahydrofolate dehydrogenase and cyclohydrolase. Residues 51 to 55 (YVRMK) and 98 to 100 (VQL) each bind substrate. 169 to 171 (GRS) serves as a coordination point for NADP(+). A Phosphoserine modification is found at Ser176. Ser194 lines the NADP(+) pocket. 277-281 (PGGVG) serves as a coordination point for substrate. Residue Thr318 is modified to Phosphothreonine. The formyltetrahydrofolate synthetase stretch occupies residues 320–946 (VPSDIDISRA…DDDGEIDGLF (627 aa)). Ser322 is modified (phosphoserine). Residue 384–391 (TPLGEGKS) coordinates ATP.

It in the N-terminal section; belongs to the tetrahydrofolate dehydrogenase/cyclohydrolase family. This sequence in the C-terminal section; belongs to the formate--tetrahydrofolate ligase family. As to quaternary structure, homodimer.

Its subcellular location is the cytoplasm. The protein localises to the nucleus. The catalysed reaction is (6R)-5,10-methylene-5,6,7,8-tetrahydrofolate + NADP(+) = (6R)-5,10-methenyltetrahydrofolate + NADPH. It catalyses the reaction (6R)-5,10-methenyltetrahydrofolate + H2O = (6R)-10-formyltetrahydrofolate + H(+). It carries out the reaction (6S)-5,6,7,8-tetrahydrofolate + formate + ATP = (6R)-10-formyltetrahydrofolate + ADP + phosphate. It participates in one-carbon metabolism; tetrahydrofolate interconversion. Functionally, cytoplasmic isozyme of C-1-tetrahydrofolate synthase. The trifunctional enzyme catalyzes the interconversion of the one-carbon derivatives of tetrahydrofolate (THF) between different oxidation states by the enzymatic activities 10-formyltetrahydrofolate synthetase, 5,lO-methenyltetrahydrofolate cyclohydrolase, and 5,lO-methylenetetrahydrofolate dehydrogenase. Involved in the generation of one-carbon intermediates in the biosynthesis of the purine bases. This chain is C-1-tetrahydrofolate synthase, cytoplasmic (ADE3), found in Saccharomyces cerevisiae (strain ATCC 204508 / S288c) (Baker's yeast).